Here is a 111-residue protein sequence, read N- to C-terminus: Toxin 3FTx-Tel4 (111 aa).

A signal peptide spans 1–19 (MKTLLLALVVVAFMCLGSA). A propeptide spanning residues 20–34 (DQLGLGSQRIDWEQG) is cleaved from the precursor. Pyrrolidone carboxylic acid is present on Gln35. Intrachain disulfides connect Cys44–Cys68, Cys47–Cys55, Cys61–Cys87, Cys91–Cys102, and Cys103–Cys108.

Belongs to the three-finger toxin family. Ancestral subfamily. Boigatoxin sub-subfamily. As to expression, expressed by the venom gland.

It is found in the secreted. Functionally, potent postsynaptic neurotoxin. Displays readily reversible competitive antagonism at the nicotinic acetylcholine receptor (nAChR). This is Toxin 3FTx-Tel4 from Telescopus dhara (Egyptian catsnake).